Here is a 353-residue protein sequence, read N- to C-terminus: Histidinol-phosphate aminotransferase (353 aa).

The residue at position 211 (lysine 211) is an N6-(pyridoxal phosphate)lysine.

It belongs to the class-II pyridoxal-phosphate-dependent aminotransferase family. Histidinol-phosphate aminotransferase subfamily. As to quaternary structure, homodimer. Pyridoxal 5'-phosphate serves as cofactor.

The catalysed reaction is L-histidinol phosphate + 2-oxoglutarate = 3-(imidazol-4-yl)-2-oxopropyl phosphate + L-glutamate. It functions in the pathway amino-acid biosynthesis; L-histidine biosynthesis; L-histidine from 5-phospho-alpha-D-ribose 1-diphosphate: step 7/9. This chain is Histidinol-phosphate aminotransferase, found in Klebsiella pneumoniae subsp. pneumoniae (strain ATCC 700721 / MGH 78578).